Consider the following 461-residue polypeptide: ATP synthase subunit beta 2 (461 aa).

Position 151–158 (151–158) interacts with ATP; that stretch reads GGAGVGKT.

Belongs to the ATPase alpha/beta chains family. F-type ATPases have 2 components, CF(1) - the catalytic core - and CF(0) - the membrane proton channel. CF(1) has five subunits: alpha(3), beta(3), gamma(1), delta(1), epsilon(1). CF(0) has three main subunits: a(1), b(2) and c(9-12). The alpha and beta chains form an alternating ring which encloses part of the gamma chain. CF(1) is attached to CF(0) by a central stalk formed by the gamma and epsilon chains, while a peripheral stalk is formed by the delta and b chains.

Its subcellular location is the cell inner membrane. It catalyses the reaction ATP + H2O + 4 H(+)(in) = ADP + phosphate + 5 H(+)(out). In terms of biological role, produces ATP from ADP in the presence of a proton gradient across the membrane. The catalytic sites are hosted primarily by the beta subunits. This Pseudoalteromonas atlantica (strain T6c / ATCC BAA-1087) protein is ATP synthase subunit beta 2.